The primary structure comprises 512 residues: Bifunctional purine biosynthesis protein PurH (512 aa).

In terms of domain architecture, MGS-like spans 1-144 (MKRALVSVSD…KNYHDVTIVV (144 aa)).

The protein belongs to the PurH family.

It carries out the reaction (6R)-10-formyltetrahydrofolate + 5-amino-1-(5-phospho-beta-D-ribosyl)imidazole-4-carboxamide = 5-formamido-1-(5-phospho-D-ribosyl)imidazole-4-carboxamide + (6S)-5,6,7,8-tetrahydrofolate. It catalyses the reaction IMP + H2O = 5-formamido-1-(5-phospho-D-ribosyl)imidazole-4-carboxamide. The protein operates within purine metabolism; IMP biosynthesis via de novo pathway; 5-formamido-1-(5-phospho-D-ribosyl)imidazole-4-carboxamide from 5-amino-1-(5-phospho-D-ribosyl)imidazole-4-carboxamide (10-formyl THF route): step 1/1. It functions in the pathway purine metabolism; IMP biosynthesis via de novo pathway; IMP from 5-formamido-1-(5-phospho-D-ribosyl)imidazole-4-carboxamide: step 1/1. This chain is Bifunctional purine biosynthesis protein PurH, found in Limosilactobacillus reuteri (strain DSM 20016) (Lactobacillus reuteri).